A 431-amino-acid polypeptide reads, in one-letter code: Adenylosuccinate synthetase (431 aa).

Residues glycine 12–lysine 18 and glycine 40–threonine 42 each bind GTP. The active-site Proton acceptor is aspartate 13. 2 residues coordinate Mg(2+): aspartate 13 and glycine 40. IMP is bound by residues aspartate 13–lysine 16, asparagine 38–histidine 41, threonine 128, arginine 142, glutamine 225, threonine 240, and arginine 304. The active-site Proton donor is the histidine 41. Threonine 300 to arginine 306 provides a ligand contact to substrate. GTP contacts are provided by residues arginine 306, lysine 332 to aspartate 334, and glycine 414 to glycine 416.

Belongs to the adenylosuccinate synthetase family. In terms of assembly, homodimer. It depends on Mg(2+) as a cofactor.

It is found in the cytoplasm. It catalyses the reaction IMP + L-aspartate + GTP = N(6)-(1,2-dicarboxyethyl)-AMP + GDP + phosphate + 2 H(+). It functions in the pathway purine metabolism; AMP biosynthesis via de novo pathway; AMP from IMP: step 1/2. Plays an important role in the de novo pathway of purine nucleotide biosynthesis. Catalyzes the first committed step in the biosynthesis of AMP from IMP. This chain is Adenylosuccinate synthetase, found in Thermomicrobium roseum (strain ATCC 27502 / DSM 5159 / P-2).